The sequence spans 148 residues: Hemoglobin subunit beta (148 aa).

Positions Xaa3–His148 constitute a Globin domain. 2 residues coordinate heme b: His64 and His93.

Belongs to the globin family. As to quaternary structure, heterotetramer of two alpha chains and two beta chains. In terms of tissue distribution, red blood cells.

Functionally, involved in oxygen transport from gills to the various peripheral tissues. This Decapterus maruadsi (Japanese scad) protein is Hemoglobin subunit beta (hbb).